The chain runs to 154 residues: Ribosome maturation factor RimP (154 aa).

This sequence belongs to the RimP family.

It is found in the cytoplasm. Functionally, required for maturation of 30S ribosomal subunits. The chain is Ribosome maturation factor RimP from Thioalkalivibrio sulfidiphilus (strain HL-EbGR7).